A 137-amino-acid polypeptide reads, in one-letter code: Holo-[acyl-carrier-protein] synthase (137 aa).

Mg(2+) contacts are provided by Asp-8 and Glu-58.

This sequence belongs to the P-Pant transferase superfamily. AcpS family. Mg(2+) is required as a cofactor.

The protein resides in the cytoplasm. It catalyses the reaction apo-[ACP] + CoA = holo-[ACP] + adenosine 3',5'-bisphosphate + H(+). In terms of biological role, transfers the 4'-phosphopantetheine moiety from coenzyme A to a Ser of acyl-carrier-protein. The sequence is that of Holo-[acyl-carrier-protein] synthase from Lactobacillus delbrueckii subsp. bulgaricus (strain ATCC BAA-365 / Lb-18).